A 620-amino-acid chain; its full sequence is Rpb7-binding protein seb1 (620 aa).

The CID domain occupies 1 to 151; the sequence is MSGIAEFDGI…SLRSKLKDAM (151 aa). Disordered regions lie at residues 151–191 and 327–398; these read MAST…RPVE and SVPL…TIPP. Ser343 carries the phosphoserine modification. The segment covering 361–374 has biased composition (low complexity); it reads PSPSHLSIPSTLPP. The RRM domain occupies 406–478; it reads RTLFLGGITR…TTIRTKWGVG (73 aa). The tract at residues 558–620 is disordered; it reads RGRKPYRGGP…YVSQPPWQPQ (63 aa). A compositionally biased stretch (basic and acidic residues) spans 570 to 580; sequence HHGERHFDSGN.

In terms of assembly, interacts with rpb7.

The protein localises to the nucleus. Involved in the processing of pol II transcripts. The chain is Rpb7-binding protein seb1 (seb1) from Schizosaccharomyces pombe (strain 972 / ATCC 24843) (Fission yeast).